A 183-amino-acid polypeptide reads, in one-letter code: Dual-action ribosomal maturation protein DarP (183 aa).

Belongs to the DarP family.

The protein resides in the cytoplasm. Functionally, member of a network of 50S ribosomal subunit biogenesis factors which assembles along the 30S-50S interface, preventing incorrect 23S rRNA structures from forming. Promotes peptidyl transferase center (PTC) maturation. The protein is Dual-action ribosomal maturation protein DarP of Escherichia coli O81 (strain ED1a).